The primary structure comprises 86 residues: Large ribosomal subunit protein uL23 (86 aa).

Belongs to the universal ribosomal protein uL23 family. As to quaternary structure, part of the 50S ribosomal subunit. Contacts protein L29.

Functionally, binds to 23S rRNA. One of the proteins that surrounds the polypeptide exit tunnel on the outside of the ribosome. This is Large ribosomal subunit protein uL23 from Methanococcus maripaludis (strain C6 / ATCC BAA-1332).